Consider the following 184-residue polypeptide: ATP synthase subunit b, chloroplastic (184 aa).

Residues 26 to 48 (ILATNLINLSVVLGVLIFFGKGV) form a helical membrane-spanning segment.

The protein belongs to the ATPase B chain family. In terms of assembly, F-type ATPases have 2 components, F(1) - the catalytic core - and F(0) - the membrane proton channel. F(1) has five subunits: alpha(3), beta(3), gamma(1), delta(1), epsilon(1). F(0) has four main subunits: a(1), b(1), b'(1) and c(10-14). The alpha and beta chains form an alternating ring which encloses part of the gamma chain. F(1) is attached to F(0) by a central stalk formed by the gamma and epsilon chains, while a peripheral stalk is formed by the delta, b and b' chains.

It is found in the plastid. The protein resides in the chloroplast thylakoid membrane. In terms of biological role, f(1)F(0) ATP synthase produces ATP from ADP in the presence of a proton or sodium gradient. F-type ATPases consist of two structural domains, F(1) containing the extramembraneous catalytic core and F(0) containing the membrane proton channel, linked together by a central stalk and a peripheral stalk. During catalysis, ATP synthesis in the catalytic domain of F(1) is coupled via a rotary mechanism of the central stalk subunits to proton translocation. Functionally, component of the F(0) channel, it forms part of the peripheral stalk, linking F(1) to F(0). The chain is ATP synthase subunit b, chloroplastic from Acorus calamus (Sweet flag).